The following is a 461-amino-acid chain: MKPSIFYSSRQPYLKYLAIILTTITIYVLTHSSYSADPNINDVTTKPISETVPQPPPQSPSSPEQQQQQPANQDQIVKVPEELKNKPQDLVVDNNKDQKPAVSGVPKSSSSSPQQQEKQDTKKESENSSSSKDPVKPEKVKATFVTLARNSELYDLIKSIRNVEDRFNRKFNYDWVFLNDDDFTQEFKDLTTALVSGKTKYGKIPKEHWSYPDWIDLKRAEETRKNMKLQKIIYGDSESYRHMCRFESGFFWRHPLLDDYDWYWRVEPSIDIHCDLNYDLFKYMEDNNKVYGFTISIHEFRATIPTLWDTTKKFIKENPQYLAENNFMDFISDDKGETYNLCHFWSNFEIANLNFWRGEAYRKYFDYLDQTGGFFYERWGDAPIHSIAAALFLPKDKIHYFDDVGYKHSVYTQCPLNPQFRYEHKCHCNPDNDFTFRGYSCGKKYFEKMGLQKPKEWEKYQ.

Residues 1 to 12 lie on the Cytoplasmic side of the membrane; it reads MKPSIFYSSRQP. The helical; Signal-anchor for type II membrane protein transmembrane segment at 13-35 threads the bilayer; sequence YLKYLAIILTTITIYVLTHSSYS. Polar residues predominate over residues 35-52; that stretch reads SADPNINDVTTKPISETV. The segment at 35–138 is disordered; that stretch reads SADPNINDVT…SSSKDPVKPE (104 aa). At 36 to 461 the chain is on the lumenal side; it reads ADPNINDVTT…QKPKEWEKYQ (426 aa). Low complexity-rich tracts occupy residues 61–70 and 106–116; these read SSPEQQQQQP and PKSSSSSPQQQ. Over residues 117-126 the composition is skewed to basic and acidic residues; sequence EKQDTKKESE. The Nucleophile role is filled by E349.

This sequence belongs to the glycosyltransferase 15 family.

It localises to the golgi apparatus membrane. Functionally, involved in O-glycosylation of cell wall and secreted proteins. Transfers an alpha-D-mannosyl residue from GDP-mannose into lipid-linked oligosaccharide, forming an alpha-(1-&gt;2)-D-mannosyl-D-mannose linkage. Mainly responsible for the addition of the third mannose residue in an O-linked mannose pentamer. Can also substitute for MNT1 by adding the second mannose residue. Important for adherence to host surfaces and for virulence. The sequence is that of Glycolipid 2-alpha-mannosyltransferase 2 (MNT2) from Candida albicans (strain SC5314 / ATCC MYA-2876) (Yeast).